A 95-amino-acid polypeptide reads, in one-letter code: Co-chaperonin GroES (95 aa).

This sequence belongs to the GroES chaperonin family. As to quaternary structure, heptamer of 7 subunits arranged in a ring. Interacts with the chaperonin GroEL.

It localises to the cytoplasm. Its function is as follows. Together with the chaperonin GroEL, plays an essential role in assisting protein folding. The GroEL-GroES system forms a nano-cage that allows encapsulation of the non-native substrate proteins and provides a physical environment optimized to promote and accelerate protein folding. GroES binds to the apical surface of the GroEL ring, thereby capping the opening of the GroEL channel. The protein is Co-chaperonin GroES of Geobacter metallireducens (strain ATCC 53774 / DSM 7210 / GS-15).